The primary structure comprises 967 residues: Sarcosine oxidase subunit alpha (967 aa).

NAD(+) is bound by residues alanine 141, aspartate 160, glutamate 161, arginine 162, serine 168, valine 207, alanine 420, and threonine 427. (6R)-5,10-methylene-5,6,7,8-tetrahydrofolate contacts are provided by threonine 694 and glutamate 786.

It belongs to the GcvT family. As to quaternary structure, heterotetramer composed of subunits alpha (SoxA), beta (SoxB), gamma (SoxG) and delta (SoxD). The cofactor is NAD(+).

It is found in the cytoplasm. The enzyme catalyses sarcosine + (6S)-5,6,7,8-tetrahydrofolate + O2 = (6R)-5,10-methylene-5,6,7,8-tetrahydrofolate + glycine + H2O2. The catalysed reaction is sarcosine + O2 + H2O = formaldehyde + glycine + H2O2. Functionally, in the presence of tetrahydrofolate, catalyzes the oxidative demethylation of sarcosine to yield glycine, 5,10-methylenetetrahydrofolate and hydrogen peroxide. In the absence of tetrahydrofolate, catalyzes the oxidative demethylation of sarcosine to yield glycine, formaldehyde and hydrogen peroxide. This Corynebacterium sp. (strain P-1) protein is Sarcosine oxidase subunit alpha.